A 169-amino-acid chain; its full sequence is Peptide deformylase (169 aa).

Positions 91 and 133 each coordinate Fe cation. Residue E134 is part of the active site. Fe cation is bound at residue H137.

It belongs to the polypeptide deformylase family. The cofactor is Fe(2+).

The enzyme catalyses N-terminal N-formyl-L-methionyl-[peptide] + H2O = N-terminal L-methionyl-[peptide] + formate. Removes the formyl group from the N-terminal Met of newly synthesized proteins. Requires at least a dipeptide for an efficient rate of reaction. N-terminal L-methionine is a prerequisite for activity but the enzyme has broad specificity at other positions. The protein is Peptide deformylase of Klebsiella pneumoniae (strain 342).